The chain runs to 45 residues: Iota-conotoxin-like R11.10 (45 aa).

Intrachain disulfides connect cysteine 5–cysteine 19, cysteine 12–cysteine 22, cysteine 18–cysteine 27, and cysteine 21–cysteine 36. Leucine 43 carries the D-leucine modification. Position 45 (arginine 45) is a propeptide, removed by a carboxypeptidase.

Belongs to the conotoxin I1 superfamily. As to expression, expressed by the venom duct.

The protein resides in the secreted. In terms of biological role, iota-conotoxins bind to voltage-gated sodium channels (Nav) and act as agonists by shifting the voltage-dependence of activation to more hyperpolarized levels. Produces general excitatory symptoms. The polypeptide is Iota-conotoxin-like R11.10 (Conus radiatus (Rayed cone)).